Here is a 411-residue protein sequence, read N- to C-terminus: Acetate kinase (411 aa).

Asn-7 is a Mg(2+) binding site. An ATP-binding site is contributed by Lys-14. Arg-94 provides a ligand contact to substrate. Residue Asp-151 is the Proton donor/acceptor of the active site. Residues 211–215 (HLGNG), 285–287 (DMR), and 333–337 (GIGEN) each bind ATP. Glu-387 is a binding site for Mg(2+).

It belongs to the acetokinase family. As to quaternary structure, homodimer. It depends on Mg(2+) as a cofactor. Requires Mn(2+) as cofactor.

The protein localises to the cytoplasm. It carries out the reaction acetate + ATP = acetyl phosphate + ADP. The protein operates within metabolic intermediate biosynthesis; acetyl-CoA biosynthesis; acetyl-CoA from acetate: step 1/2. Functionally, catalyzes the formation of acetyl phosphate from acetate and ATP. Can also catalyze the reverse reaction. The chain is Acetate kinase from Syntrophobacter fumaroxidans (strain DSM 10017 / MPOB).